The following is a 346-amino-acid chain: Protein SHI RELATED SEQUENCE 5 (346 aa).

The tract at residues 7–31 (LGGRDNNSNNNKQDHHQVDKDHHHQ) is disordered. Over residues 18–31 (KQDHHQVDKDHHHQ) the composition is skewed to basic and acidic residues. Positions 125, 128, 136, 141, 145, and 152 each coordinate Zn(2+). The segment at residues 125 to 152 (CQDCGNQAKKDCPHMRCRTCCKSRGFHC) is a DNA-binding region (zn(2)-C6 fungal-type; degenerate). The span at 175–186 (SLQHHSASSRET) shows a compositional bias: polar residues. The segment at 175 to 215 (SLQHHSASSRETQNAKRLREASGGDNNDDKDHSGGGGSALA) is disordered. The segment covering 187–207 (QNAKRLREASGGDNNDDKDHS) has biased composition (basic and acidic residues). The short motif at 269-272 (IGGH) is the Required for homo- and heterodimerization element.

This sequence belongs to the SHI protein family.

The protein localises to the nucleus. In terms of biological role, transcription activator that binds DNA on 5'-ACTCTAC-3' and promotes auxin homeostasis-regulating gene expression (e.g. YUC genes), as well as genes affecting stamen development, cell expansion and timing of flowering. Synergistically with other SHI-related proteins, regulates gynoecium, stamen and leaf development in a dose-dependent manner, controlling apical-basal patterning. Promotes style and stigma formation, and influences vascular development during gynoecium development. May also have a role in the formation and/or maintenance of the shoot apical meristem (SAM). In Arabidopsis thaliana (Mouse-ear cress), this protein is Protein SHI RELATED SEQUENCE 5 (SRS5).